We begin with the raw amino-acid sequence, 209 residues long: Uracil phosphoribosyltransferase (209 aa).

5-phospho-alpha-D-ribose 1-diphosphate-binding positions include arginine 79, arginine 104, and 131-139 (DPMLATGGS). Residues isoleucine 194 and 199–201 (GDA) contribute to the uracil site. Aspartate 200 provides a ligand contact to 5-phospho-alpha-D-ribose 1-diphosphate.

It belongs to the UPRTase family. It depends on Mg(2+) as a cofactor.

The catalysed reaction is UMP + diphosphate = 5-phospho-alpha-D-ribose 1-diphosphate + uracil. Its pathway is pyrimidine metabolism; UMP biosynthesis via salvage pathway; UMP from uracil: step 1/1. Allosterically activated by GTP. Catalyzes the conversion of uracil and 5-phospho-alpha-D-ribose 1-diphosphate (PRPP) to UMP and diphosphate. The protein is Uracil phosphoribosyltransferase of Lachnoclostridium phytofermentans (strain ATCC 700394 / DSM 18823 / ISDg) (Clostridium phytofermentans).